A 195-amino-acid chain; its full sequence is ATP-dependent Clp protease proteolytic subunit (195 aa).

Ser-98 serves as the catalytic Nucleophile. The active site involves His-123.

The protein belongs to the peptidase S14 family. Fourteen ClpP subunits assemble into 2 heptameric rings which stack back to back to give a disk-like structure with a central cavity, resembling the structure of eukaryotic proteasomes.

The protein resides in the cytoplasm. It carries out the reaction Hydrolysis of proteins to small peptides in the presence of ATP and magnesium. alpha-casein is the usual test substrate. In the absence of ATP, only oligopeptides shorter than five residues are hydrolyzed (such as succinyl-Leu-Tyr-|-NHMec, and Leu-Tyr-Leu-|-Tyr-Trp, in which cleavage of the -Tyr-|-Leu- and -Tyr-|-Trp bonds also occurs).. Its function is as follows. Cleaves peptides in various proteins in a process that requires ATP hydrolysis. Has a chymotrypsin-like activity. Plays a major role in the degradation of misfolded proteins. In Helicobacter pylori (strain Shi470), this protein is ATP-dependent Clp protease proteolytic subunit.